A 412-amino-acid chain; its full sequence is Multifunctional CCA protein (412 aa).

Residues G8 and R11 each contribute to the ATP site. The CTP site is built by G8 and R11. Mg(2+)-binding residues include D21 and D23. The ATP site is built by R91, R137, and R140. CTP-binding residues include R91, R137, and R140. Residues 228-329 (TGIHTMMVLA…LKVFDKADAW (102 aa)) form the HD domain.

Belongs to the tRNA nucleotidyltransferase/poly(A) polymerase family. Bacterial CCA-adding enzyme type 1 subfamily. Monomer. Can also form homodimers and oligomers. Mg(2+) serves as cofactor. Requires Ni(2+) as cofactor.

It carries out the reaction a tRNA precursor + 2 CTP + ATP = a tRNA with a 3' CCA end + 3 diphosphate. It catalyses the reaction a tRNA with a 3' CCA end + 2 CTP + ATP = a tRNA with a 3' CCACCA end + 3 diphosphate. Catalyzes the addition and repair of the essential 3'-terminal CCA sequence in tRNAs without using a nucleic acid template. Adds these three nucleotides in the order of C, C, and A to the tRNA nucleotide-73, using CTP and ATP as substrates and producing inorganic pyrophosphate. tRNA 3'-terminal CCA addition is required both for tRNA processing and repair. Also involved in tRNA surveillance by mediating tandem CCA addition to generate a CCACCA at the 3' terminus of unstable tRNAs. While stable tRNAs receive only 3'-terminal CCA, unstable tRNAs are marked with CCACCA and rapidly degraded. This is Multifunctional CCA protein from Aeromonas hydrophila subsp. hydrophila (strain ATCC 7966 / DSM 30187 / BCRC 13018 / CCUG 14551 / JCM 1027 / KCTC 2358 / NCIMB 9240 / NCTC 8049).